A 156-amino-acid chain; its full sequence is ATP synthase subunit b (156 aa).

Residues 11-31 traverse the membrane as a helical segment; that stretch reads AIAFILFVAFCMKYVWPPLMA.

Belongs to the ATPase B chain family. As to quaternary structure, F-type ATPases have 2 components, F(1) - the catalytic core - and F(0) - the membrane proton channel. F(1) has five subunits: alpha(3), beta(3), gamma(1), delta(1), epsilon(1). F(0) has three main subunits: a(1), b(2) and c(10-14). The alpha and beta chains form an alternating ring which encloses part of the gamma chain. F(1) is attached to F(0) by a central stalk formed by the gamma and epsilon chains, while a peripheral stalk is formed by the delta and b chains.

It localises to the cell inner membrane. F(1)F(0) ATP synthase produces ATP from ADP in the presence of a proton or sodium gradient. F-type ATPases consist of two structural domains, F(1) containing the extramembraneous catalytic core and F(0) containing the membrane proton channel, linked together by a central stalk and a peripheral stalk. During catalysis, ATP synthesis in the catalytic domain of F(1) is coupled via a rotary mechanism of the central stalk subunits to proton translocation. Its function is as follows. Component of the F(0) channel, it forms part of the peripheral stalk, linking F(1) to F(0). This chain is ATP synthase subunit b, found in Erwinia tasmaniensis (strain DSM 17950 / CFBP 7177 / CIP 109463 / NCPPB 4357 / Et1/99).